A 210-amino-acid polypeptide reads, in one-letter code: ATP-dependent dethiobiotin synthetase BioD (210 aa).

13–18 (DVGKTV) contributes to the ATP binding site. Thr17 is a Mg(2+) binding site. Residue Lys33 is part of the active site. Positions 47 and 101 each coordinate Mg(2+). Residues 101-104 (EGAG) and 185-187 (PPL) each bind ATP.

It belongs to the dethiobiotin synthetase family. Homodimer. The cofactor is Mg(2+).

It localises to the cytoplasm. The enzyme catalyses (7R,8S)-7,8-diammoniononanoate + CO2 + ATP = (4R,5S)-dethiobiotin + ADP + phosphate + 3 H(+). The protein operates within cofactor biosynthesis; biotin biosynthesis; biotin from 7,8-diaminononanoate: step 1/2. Functionally, catalyzes a mechanistically unusual reaction, the ATP-dependent insertion of CO2 between the N7 and N8 nitrogen atoms of 7,8-diaminopelargonic acid (DAPA, also called 7,8-diammoniononanoate) to form a ureido ring. The chain is ATP-dependent dethiobiotin synthetase BioD from Afipia carboxidovorans (strain ATCC 49405 / DSM 1227 / KCTC 32145 / OM5) (Oligotropha carboxidovorans).